The chain runs to 39 residues: Cytochrome b559 subunit beta (39 aa).

Residues 14-30 traverse the membrane as a helical segment; it reads WLAVHGLAVPTVFFLGS. Residue H18 participates in heme binding.

The protein belongs to the PsbE/PsbF family. In terms of assembly, heterodimer of an alpha subunit and a beta subunit. PSII is composed of 1 copy each of membrane proteins PsbA, PsbB, PsbC, PsbD, PsbE, PsbF, PsbH, PsbI, PsbJ, PsbK, PsbL, PsbM, PsbT, PsbX, PsbY, PsbZ, Psb30/Ycf12, at least 3 peripheral proteins of the oxygen-evolving complex and a large number of cofactors. It forms dimeric complexes. The cofactor is heme b.

The protein localises to the plastid. Its subcellular location is the chloroplast thylakoid membrane. This b-type cytochrome is tightly associated with the reaction center of photosystem II (PSII). PSII is a light-driven water:plastoquinone oxidoreductase that uses light energy to abstract electrons from H(2)O, generating O(2) and a proton gradient subsequently used for ATP formation. It consists of a core antenna complex that captures photons, and an electron transfer chain that converts photonic excitation into a charge separation. This chain is Cytochrome b559 subunit beta, found in Pinus koraiensis (Korean pine).